Here is a 599-residue protein sequence, read N- to C-terminus: Subtilisin-like protease 1 (599 aa).

Residues Met-1–Ala-20 form the signal peptide. The propeptide at His-21–Asp-195 is inhibition peptide. An N-linked (GlcNAc...) asparagine glycan is attached at Asn-57. Positions Glu-74 to Lys-101 form a coiled coil. Ca(2+) contacts are provided by Asn-123, Thr-126, Pro-128, and Gly-183. An N-linked (GlcNAc...) asparagine glycan is attached at Asn-227. Asp-251 contributes to the Ca(2+) binding site. A Peptidase S8 domain is found at Gln-257–Val-574. Disulfide bonds link Cys-283/Cys-393 and Cys-372/Cys-389. The active-site Charge relay system is Asp-286. Ca(2+) contacts are provided by Asp-295, Glu-306, Asp-314, Asp-315, Asp-316, Asn-318, Ile-320, Asp-322, and Asp-323. Residue Asn-331 is glycosylated (N-linked (GlcNAc...) asparagine). Catalysis depends on His-342, which acts as the Charge relay system. Residue Ile-353 coordinates Ca(2+). A glycan (N-linked (GlcNAc...) asparagine) is linked at Asn-355. The Ca(2+) site is built by Asn-356, Ile-358, and Val-360. N-linked (GlcNAc...) asparagine glycans are attached at residues Asn-402 and Asn-434. A disulfide bridge links Cys-435 with Cys-448. Ser-519 (charge relay system) is an active-site residue.

It belongs to the peptidase S8 family. Post-translationally, the N-terminal prodomain is cleaved.

The protein resides in the secreted. Its subcellular location is the parasitophorous vacuole lumen. It is found in the cytoplasmic vesicle. The protein localises to the secretory vesicle. It carries out the reaction Hydrolysis of proteins with broad specificity for peptide bonds, and a preference for a large uncharged residue in P1. Hydrolyzes peptide amides.. Its function is as follows. Mediates the proteolytic maturation of serine protease SERA3. Mediates the proteolytic maturation of MSP1, and thereby may prime the parasite cell surface for invasion of fresh erythrocytes. Required for completion of the parasite pre-erythrocytic stages. Required for hepatic schizont development and merozoite formation. Required for the egress of the hepatic merozoites from the parasitophorous vacuole. Required for parasite infectivity during blood stages. Required for male gamete egress. The sequence is that of Subtilisin-like protease 1 from Plasmodium berghei (strain Anka).